Reading from the N-terminus, the 424-residue chain is Serine--tRNA ligase (424 aa).

231-233 (TAE) is a binding site for L-serine. Residue 262-264 (RAE) participates in ATP binding. Glu285 provides a ligand contact to L-serine. 349-352 (EISS) is a binding site for ATP. Ser385 contributes to the L-serine binding site.

Belongs to the class-II aminoacyl-tRNA synthetase family. Type-1 seryl-tRNA synthetase subfamily. As to quaternary structure, homodimer. The tRNA molecule binds across the dimer.

It localises to the cytoplasm. The catalysed reaction is tRNA(Ser) + L-serine + ATP = L-seryl-tRNA(Ser) + AMP + diphosphate + H(+). The enzyme catalyses tRNA(Sec) + L-serine + ATP = L-seryl-tRNA(Sec) + AMP + diphosphate + H(+). It participates in aminoacyl-tRNA biosynthesis; selenocysteinyl-tRNA(Sec) biosynthesis; L-seryl-tRNA(Sec) from L-serine and tRNA(Sec): step 1/1. Catalyzes the attachment of serine to tRNA(Ser). Is also able to aminoacylate tRNA(Sec) with serine, to form the misacylated tRNA L-seryl-tRNA(Sec), which will be further converted into selenocysteinyl-tRNA(Sec). This Geobacillus thermodenitrificans (strain NG80-2) protein is Serine--tRNA ligase.